The chain runs to 129 residues: Follitropin subunit beta (129 aa).

The first 20 residues, 1-20 (MKTLQFFFLFCCWKAICCNS), serve as a signal peptide directing secretion. Cystine bridges form between cysteine 21/cysteine 69, cysteine 35/cysteine 84, cysteine 38/cysteine 122, cysteine 46/cysteine 100, cysteine 50/cysteine 102, and cysteine 105/cysteine 112. N-linked (GlcNAc...) asparagine glycans are attached at residues asparagine 25 and asparagine 42.

It belongs to the glycoprotein hormones subunit beta family. As to quaternary structure, heterodimer. The active follitropin is a heterodimer composed of an alpha chain/CGA shared with other hormones and a unique beta chain/FSHB shown here.

The protein localises to the secreted. Together with the alpha chain CGA constitutes follitropin, the follicle-stimulating hormone, and provides its biological specificity to the hormone heterodimer. Binds FSHR, a G protein-coupled receptor, on target cells to activate downstream signaling pathways. Follitropin is involved in follicle development and spermatogenesis in reproductive organs. The polypeptide is Follitropin subunit beta (FSHB) (Gorilla gorilla gorilla (Western lowland gorilla)).